The chain runs to 140 residues: Large ribosomal subunit protein uL16 (140 aa).

Belongs to the universal ribosomal protein uL16 family. In terms of assembly, part of the 50S ribosomal subunit.

In terms of biological role, binds 23S rRNA and is also seen to make contacts with the A and possibly P site tRNAs. The chain is Large ribosomal subunit protein uL16 from Trichlorobacter lovleyi (strain ATCC BAA-1151 / DSM 17278 / SZ) (Geobacter lovleyi).